We begin with the raw amino-acid sequence, 328 residues long: 7,8-didemethyl-8-hydroxy-5-deazariboflavin synthase (328 aa).

In terms of domain architecture, Radical SAM core spans 1 to 242; the sequence is MTYSRNIFIP…PDVSIQVPPN (242 aa). [4Fe-4S] cluster contacts are provided by Cys15, Cys19, and Cys22.

It belongs to the radical SAM superfamily. CofG family. Consists of two subunits, CofG and CofH. It depends on [4Fe-4S] cluster as a cofactor.

It catalyses the reaction 5-amino-5-(4-hydroxybenzyl)-6-(D-ribitylimino)-5,6-dihydrouracil + S-adenosyl-L-methionine = 7,8-didemethyl-8-hydroxy-5-deazariboflavin + 5'-deoxyadenosine + L-methionine + NH4(+) + H(+). It functions in the pathway cofactor biosynthesis; coenzyme F0 biosynthesis. In terms of biological role, catalyzes the radical-mediated synthesis of 7,8-didemethyl-8-hydroxy-5-deazariboflavin from 5-amino-5-(4-hydroxybenzyl)-6-(D-ribitylimino)-5,6-dihydrouracil. The polypeptide is 7,8-didemethyl-8-hydroxy-5-deazariboflavin synthase (Methanothermobacter thermautotrophicus (strain ATCC 29096 / DSM 1053 / JCM 10044 / NBRC 100330 / Delta H) (Methanobacterium thermoautotrophicum)).